The primary structure comprises 1590 residues: Pentafunctional AROM polypeptide (1590 aa).

The interval 1 to 387 (MGSTTFENPT…YEPKASVVED (387 aa)) is 3-dehydroquinate synthase. NAD(+) contacts are provided by residues 49–51 (DTN), 86–89 (ENSK), 117–119 (GGV), and Asp122. Arg133 contacts 7-phospho-2-dehydro-3-deoxy-D-arabino-heptonate. 142–143 (TT) contacts NAD(+). 7-phospho-2-dehydro-3-deoxy-D-arabino-heptonate contacts are provided by Asp149 and Lys155. Lys164 serves as a coordination point for NAD(+). Residue Asn165 coordinates 7-phospho-2-dehydro-3-deoxy-D-arabino-heptonate. Residues 182 to 185 (FLET) and Asn193 each bind NAD(+). A Zn(2+)-binding site is contributed by Glu197. 7-phospho-2-dehydro-3-deoxy-D-arabino-heptonate contacts are provided by residues 197–200 (EVVK) and Lys253. Glu263 serves as the catalytic Proton acceptor; for 3-dehydroquinate synthase activity. 7-phospho-2-dehydro-3-deoxy-D-arabino-heptonate contacts are provided by residues 267–271 (RNILN) and His274. Residue His274 coordinates Zn(2+). His278 (proton acceptor; for 3-dehydroquinate synthase activity) is an active-site residue. Residues His290 and Lys359 each coordinate 7-phospho-2-dehydro-3-deoxy-D-arabino-heptonate. His290 provides a ligand contact to Zn(2+). The interval 400–841 (VRPSVPETLN…WDILSKSFQV (442 aa)) is EPSP synthase. The active-site For EPSP synthase activity is the Cys823. The interval 863–1055 (DKSIFIIGMR…RNKPQSFFVS (193 aa)) is shikimate kinase. 870-877 (GMRGAGKT) contacts ATP. Residues 1056–1276 (LTMPDISGAA…AAPGQLSAAE (221 aa)) form a 3-dehydroquinase region. Residue His1179 is the Proton acceptor; for 3-dehydroquinate dehydratase activity of the active site. The active-site Schiff-base intermediate with substrate; for 3-dehydroquinate dehydratase activity is the Lys1207. The interval 1289 to 1590 (PKSFYLFGTP…KMDKHPTFVC (302 aa)) is shikimate dehydrogenase.

It in the N-terminal section; belongs to the sugar phosphate cyclases superfamily. Dehydroquinate synthase family. The protein in the 2nd section; belongs to the EPSP synthase family. In the 3rd section; belongs to the shikimate kinase family. This sequence in the 4th section; belongs to the type-I 3-dehydroquinase family. It in the C-terminal section; belongs to the shikimate dehydrogenase family. In terms of assembly, homodimer. Zn(2+) is required as a cofactor.

The protein localises to the cytoplasm. It catalyses the reaction 7-phospho-2-dehydro-3-deoxy-D-arabino-heptonate = 3-dehydroquinate + phosphate. It carries out the reaction 3-dehydroquinate = 3-dehydroshikimate + H2O. The catalysed reaction is shikimate + NADP(+) = 3-dehydroshikimate + NADPH + H(+). The enzyme catalyses shikimate + ATP = 3-phosphoshikimate + ADP + H(+). It catalyses the reaction 3-phosphoshikimate + phosphoenolpyruvate = 5-O-(1-carboxyvinyl)-3-phosphoshikimate + phosphate. It functions in the pathway metabolic intermediate biosynthesis; chorismate biosynthesis; chorismate from D-erythrose 4-phosphate and phosphoenolpyruvate: step 2/7. It participates in metabolic intermediate biosynthesis; chorismate biosynthesis; chorismate from D-erythrose 4-phosphate and phosphoenolpyruvate: step 3/7. The protein operates within metabolic intermediate biosynthesis; chorismate biosynthesis; chorismate from D-erythrose 4-phosphate and phosphoenolpyruvate: step 4/7. Its pathway is metabolic intermediate biosynthesis; chorismate biosynthesis; chorismate from D-erythrose 4-phosphate and phosphoenolpyruvate: step 5/7. It functions in the pathway metabolic intermediate biosynthesis; chorismate biosynthesis; chorismate from D-erythrose 4-phosphate and phosphoenolpyruvate: step 6/7. Functionally, the AROM polypeptide catalyzes 5 consecutive enzymatic reactions in prechorismate polyaromatic amino acid biosynthesis. This Sclerotinia sclerotiorum (White mold) protein is Pentafunctional AROM polypeptide.